The primary structure comprises 208 residues: Superoxide dismutase [Mn] (208 aa).

His27, His81, Asp168, and His172 together coordinate Mn(2+).

Belongs to the iron/manganese superoxide dismutase family. As to quaternary structure, homodimer. Mn(2+) serves as cofactor.

It carries out the reaction 2 superoxide + 2 H(+) = H2O2 + O2. Its function is as follows. Destroys superoxide anion radicals which are normally produced within the cells and which are toxic to biological systems. This chain is Superoxide dismutase [Mn] (sodA), found in Buchnera aphidicola subsp. Baizongia pistaciae (strain Bp).